The chain runs to 551 residues: Palmdelphin (551 aa).

M1 is subject to N-acetylmethionine. Positions 12-106 form a coiled coil; the sequence is QAITDKRKIQ…LQISANEEVI (95 aa). A Glycyl lysine isopeptide (Lys-Gly) (interchain with G-Cter in SUMO2) cross-link involves residue K125. S135 and S163 each carry phosphoserine. K178 participates in a covalent cross-link: Glycyl lysine isopeptide (Lys-Gly) (interchain with G-Cter in SUMO1); alternate. Residue K178 forms a Glycyl lysine isopeptide (Lys-Gly) (interchain with G-Cter in SUMO2); alternate linkage. Positions 247–258 are enriched in basic and acidic residues; sequence ERNSKSPTEYHE. The interval 247 to 267 is disordered; that stretch reads ERNSKSPTEYHEPVYANPFCR. T270 is modified (phosphothreonine). Disordered regions lie at residues 298-387 and 452-536; these read HESE…CSSP and EDDE…DPSL. S322, S350, S371, S376, S385, and S386 each carry phosphoserine. The span at 484–495 shows a compositional bias: basic and acidic residues; it reads KRSEVSPHENTN. A phosphoserine mark is found at S498, S515, and S520.

The protein belongs to the paralemmin family. As to quaternary structure, interacts with GLUL. Phosphorylated. Expressed in the brain and the spinal cord. Expressed in the anterior olfactory nucleus, the olfactory tubercle, the nucleus supraopticus, the nucleus of the lateral olfactory tract, the piriform cortex, the cortico-amygdaloid transition zone, the septofimbrial nucleus and the indusium griseum (at protein level).

It localises to the cytoplasm. The protein localises to the cell projection. The protein resides in the dendrite. Its subcellular location is the dendritic spine. The chain is Palmdelphin (Palmd) from Rattus norvegicus (Rat).